Reading from the N-terminus, the 128-residue chain is Large ribosomal subunit protein uL18 (128 aa).

The tract at residues 1–36 (MAKRSSLTRRGVSPRAAARARRHMRVRKKVRGTPER) is disordered. Over residues 18-31 (ARARRHMRVRKKVR) the composition is skewed to basic residues.

It belongs to the universal ribosomal protein uL18 family. In terms of assembly, part of the 50S ribosomal subunit; part of the 5S rRNA/L5/L18/L25 subcomplex. Contacts the 5S and 23S rRNAs.

This is one of the proteins that bind and probably mediate the attachment of the 5S RNA into the large ribosomal subunit, where it forms part of the central protuberance. The sequence is that of Large ribosomal subunit protein uL18 from Thermobifida fusca (strain YX).